Reading from the N-terminus, the 206-residue chain is Probable chemoreceptor glutamine deamidase CheD (206 aa).

The protein belongs to the CheD family.

It carries out the reaction L-glutaminyl-[protein] + H2O = L-glutamyl-[protein] + NH4(+). Its function is as follows. Probably deamidates glutamine residues to glutamate on methyl-accepting chemotaxis receptors (MCPs), playing an important role in chemotaxis. The polypeptide is Probable chemoreceptor glutamine deamidase CheD (Laribacter hongkongensis (strain HLHK9)).